Here is a 792-residue protein sequence, read N- to C-terminus: Xaa-Pro dipeptidyl-peptidase (792 aa).

Residues Ser-363, Asp-482, and His-513 each act as charge relay system in the active site.

The protein belongs to the peptidase S15 family. As to quaternary structure, homodimer.

It is found in the cytoplasm. It catalyses the reaction Hydrolyzes Xaa-Pro-|- bonds to release unblocked, N-terminal dipeptides from substrates including Ala-Pro-|-p-nitroanilide and (sequentially) Tyr-Pro-|-Phe-Pro-|-Gly-Pro-|-Ile.. Removes N-terminal dipeptides sequentially from polypeptides having unsubstituted N-termini provided that the penultimate residue is proline. The sequence is that of Xaa-Pro dipeptidyl-peptidase from Lactobacillus delbrueckii subsp. bulgaricus (strain ATCC BAA-365 / Lb-18).